Consider the following 479-residue polypeptide: uncharacterized protein (479 aa).

The next 10 membrane-spanning stretches (helical) occupy residues 11–31, 43–63, 90–110, 151–171, 195–215, 223–243, 274–294, 295–315, 328–348, and 447–467; these read ILMA…LSLI, IVGL…AIAV, GTTW…ITGL, SGGI…SDPE, IFLT…PILG, WFLA…LICY, KALS…NSLH, INAT…SIVT, TLVW…SGFF, and WWIT…TIGM.

This sequence belongs to the SLC13A/DASS transporter (TC 2.A.47) family. DIT1 subfamily.

It localises to the cell inner membrane. This is an uncharacterized protein from Haemophilus influenzae (strain ATCC 51907 / DSM 11121 / KW20 / Rd).